The sequence spans 243 residues: Ubiquinone/menaquinone biosynthesis C-methyltransferase UbiE (243 aa).

Residues T69, D90, and 116-117 (DA) each bind S-adenosyl-L-methionine.

It belongs to the class I-like SAM-binding methyltransferase superfamily. MenG/UbiE family.

It catalyses the reaction a 2-demethylmenaquinol + S-adenosyl-L-methionine = a menaquinol + S-adenosyl-L-homocysteine + H(+). It carries out the reaction a 2-methoxy-6-(all-trans-polyprenyl)benzene-1,4-diol + S-adenosyl-L-methionine = a 5-methoxy-2-methyl-3-(all-trans-polyprenyl)benzene-1,4-diol + S-adenosyl-L-homocysteine + H(+). It participates in quinol/quinone metabolism; menaquinone biosynthesis; menaquinol from 1,4-dihydroxy-2-naphthoate: step 2/2. Its pathway is cofactor biosynthesis; ubiquinone biosynthesis. Methyltransferase required for the conversion of demethylmenaquinol (DMKH2) to menaquinol (MKH2) and the conversion of 2-polyprenyl-6-methoxy-1,4-benzoquinol (DDMQH2) to 2-polyprenyl-3-methyl-6-methoxy-1,4-benzoquinol (DMQH2). The protein is Ubiquinone/menaquinone biosynthesis C-methyltransferase UbiE of Burkholderia mallei (strain NCTC 10247).